The chain runs to 88 residues: Small ribosomal subunit protein uS17 (88 aa).

The protein belongs to the universal ribosomal protein uS17 family. In terms of assembly, part of the 30S ribosomal subunit.

In terms of biological role, one of the primary rRNA binding proteins, it binds specifically to the 5'-end of 16S ribosomal RNA. The chain is Small ribosomal subunit protein uS17 from Prochlorococcus marinus (strain MIT 9215).